Here is a 233-residue protein sequence, read N- to C-terminus: Large ribosomal subunit protein uL1 (233 aa).

Belongs to the universal ribosomal protein uL1 family. In terms of assembly, part of the 50S ribosomal subunit.

Functionally, binds directly to 23S rRNA. The L1 stalk is quite mobile in the ribosome, and is involved in E site tRNA release. Its function is as follows. Protein L1 is also a translational repressor protein, it controls the translation of the L11 operon by binding to its mRNA. The protein is Large ribosomal subunit protein uL1 of Campylobacter curvus (strain 525.92).